The chain runs to 236 residues: MGRSPCCEKAHTNKGAWTKEEDQRLVDYIRNHGEGCWRSLPKSAGLLRCGKSCRLRWINYLRPDLKRGNFTDDEDQIIIKLHSLLGNKWSLIAGRLPGRTDNEIKNYWNTHIKRKLLSHGIDPQTHRQINESKTVSSQVVVPIQNDAVEYSFSNLAVKPKTENSSDNGASTSGTTTDEDLRQNGECYYSDNSGHIKLNLDLTLGFGSWSGRIVGVGSSADSKPWCDPVMEARLSLL.

HTH myb-type domains follow at residues 9 to 61 (KAHT…INYL) and 62 to 116 (RPDL…KRKL). DNA-binding regions (H-T-H motif) lie at residues 37 to 61 (WRSL…INYL) and 89 to 112 (WSLI…NTHI). A disordered region spans residues 159 to 181 (PKTENSSDNGASTSGTTTDEDLR). A compositionally biased stretch (polar residues) spans 162–175 (ENSSDNGASTSGTT).

In terms of assembly, interacts with BHLH012/MYC1 and BHLH042/TT8. As to expression, expressed in roots, stems, flower buds, and siliques.

It is found in the nucleus. The sequence is that of Transcription repressor MYB6 (MYB6) from Arabidopsis thaliana (Mouse-ear cress).